The chain runs to 179 residues: Large ribosomal subunit protein uL5 (179 aa).

Belongs to the universal ribosomal protein uL5 family. In terms of assembly, part of the 50S ribosomal subunit; part of the 5S rRNA/L5/L18/L25 subcomplex. Contacts the 5S rRNA and the P site tRNA. Forms a bridge to the 30S subunit in the 70S ribosome.

This is one of the proteins that bind and probably mediate the attachment of the 5S RNA into the large ribosomal subunit, where it forms part of the central protuberance. In the 70S ribosome it contacts protein S13 of the 30S subunit (bridge B1b), connecting the 2 subunits; this bridge is implicated in subunit movement. Contacts the P site tRNA; the 5S rRNA and some of its associated proteins might help stabilize positioning of ribosome-bound tRNAs. This chain is Large ribosomal subunit protein uL5, found in Marinobacter nauticus (strain ATCC 700491 / DSM 11845 / VT8) (Marinobacter aquaeolei).